The following is a 176-amino-acid chain: Lipocalin-1 (176 aa).

Positions 1 to 19 (MMRALLLAIGLGLVAALQA) are cleaved as a signal peptide. C80 and C171 are oxidised to a cystine.

This sequence belongs to the calycin superfamily. Lipocalin family. Predominantly monomer. May form homodimer. Interacts with LMBR1L; this interaction mediates the endocytosis of LCN1.

It localises to the secreted. Its function is as follows. Could play a role in taste reception. Could be necessary for the concentration and delivery of sapid molecules in the gustatory system. Can bind various ligands, with chemical structures ranging from lipids and retinoids to the macrocyclic antibiotic rifampicin and even to microbial siderophores. Exhibits an extremely wide ligand pocket. The chain is Lipocalin-1 (LCN1) from Sus scrofa (Pig).